A 564-amino-acid chain; its full sequence is Copine-8 (564 aa).

2 consecutive C2 domains span residues 1-133 (MDSR…RLEK) and 142-265 (KCGT…FNVY). Positions 39, 45, 99, 101, 104, 109, 111, 173, 179, 235, 237, and 243 each coordinate Ca(2+). A Phosphoserine modification is found at S260. One can recognise a VWFA domain in the interval 309–510 (NFTVAIDFTA…VQFVPFRDYI (202 aa)).

This sequence belongs to the copine family. Ca(2+) serves as cofactor.

Functionally, probable calcium-dependent phospholipid-binding protein that may play a role in calcium-mediated intracellular processes. The polypeptide is Copine-8 (Homo sapiens (Human)).